Consider the following 113-residue polypeptide: Large ribosomal subunit protein bL19 (113 aa).

Belongs to the bacterial ribosomal protein bL19 family.

Functionally, this protein is located at the 30S-50S ribosomal subunit interface and may play a role in the structure and function of the aminoacyl-tRNA binding site. This chain is Large ribosomal subunit protein bL19, found in Corynebacterium jeikeium (strain K411).